The following is a 217-amino-acid chain: MIEIGENVLLEYIEENELKKAKSKAVSIENNELLIAYPVDVVTGRTVILHNDMEVTVEFVGKDEVPYRFISRIKGKVKDKLQMICLEMPPREKMKRIQRRQYVRTDAVLDVQIQPGNEEEIRTLSYNISAGGIAVVLADGLSFQSGESLRLIIRLPEEEHTRQIETEAVVRRIFNDPKSEKRKMTLEYSEIAAGDQQALLQYCIRRQLNKRRKARME.

One can recognise a PilZ domain in the interval 98–203; sequence QRRQYVRTDA…GDQQALLQYC (106 aa).

This is an uncharacterized protein from Bacillus subtilis (strain 168).